A 511-amino-acid chain; its full sequence is Probable lipid II flippase MurJ (511 aa).

13 consecutive transmembrane segments (helical) span residues 31–51 (IFGA…PNLL), 90–110 (LLTL…PWVI), 130–150 (LLKI…VGAI), 159–179 (IPAF…LFAA), 182–202 (FNPP…LQLV), 237–257 (ILGV…ASFL), 271–291 (LMEF…LPSL), 314–334 (CFLL…PLTV), 354–374 (LIAY…APGF), 383–403 (PVKI…AFIG), 407–427 (HAGL…LLYW), 443–463 (AFLL…LGML), and 481–501 (LMAV…VLGF).

This sequence belongs to the MurJ/MviN family.

It localises to the cell inner membrane. Its pathway is cell wall biogenesis; peptidoglycan biosynthesis. Its function is as follows. Involved in peptidoglycan biosynthesis. Transports lipid-linked peptidoglycan precursors from the inner to the outer leaflet of the cytoplasmic membrane. The sequence is that of Probable lipid II flippase MurJ from Escherichia coli O157:H7.